A 670-amino-acid chain; its full sequence is Solute carrier organic anion transporter family member 1A1 (670 aa).

Over Met1–Lys20 the chain is Cytoplasmic. Residues Val21 to Met40 form a helical membrane-spanning segment. The Extracellular portion of the chain corresponds to Asn41–Gly59. A helical transmembrane segment spans residues Leu60 to Gly80. At Thr81–Pro86 the chain is on the cytoplasmic side. The helical transmembrane segment at Val87 to Gly111 threads the bilayer. Topologically, residues Arg112–Ser155 are extracellular. N-linked (GlcNAc...) asparagine glycans are attached at residues Asn124 and Asn135. The helical transmembrane segment at Leu156–Glu184 threads the bilayer. Topologically, residues Asp185–Lys203 are cytoplasmic. Residues Val204–Ile224 form a helical membrane-spanning segment. Over Gly225–Val242 the chain is Extracellular. Residues Gly243–Pro267 traverse the membrane as a helical segment. Over Lys268–Arg311 the chain is Cytoplasmic. The helical transmembrane segment at Leu312 to Ile333 threads the bilayer. Residues Asn334–Glu353 lie on the Extracellular side of the membrane. Residues Ala354–Met377 traverse the membrane as a helical segment. At Lys378–Lys381 the chain is on the cytoplasmic side. The helical transmembrane segment at Ile382–His405 threads the bilayer. Residues Phe406 to Phe513 are Extracellular-facing. The 56-residue stretch at Ser433–Gln488 folds into the Kazal-like domain. Cystine bridges form between Cys439-Cys469, Cys445-Cys465, and Cys454-Cys486. A glycan (N-linked (GlcNAc...) asparagine) is linked at Asn492. Residues Leu514–Leu536 form a helical membrane-spanning segment. Topologically, residues Arg537–Ser545 are cytoplasmic. Residues Leu546 to Ile571 form a helical membrane-spanning segment. The Extracellular portion of the chain corresponds to Asp572–Pro605. Residues Ile606–Met623 form a helical membrane-spanning segment. Topologically, residues Arg624–Leu670 are cytoplasmic. Ser634 and Ser635 each carry phosphoserine. A compositionally biased stretch (basic and acidic residues) spans Gly645–Val654. The segment at Gly645–Leu670 is disordered.

The protein belongs to the organo anion transporter (TC 2.A.60) family. In terms of assembly, binds to PDZK1. Interaction with PDZK1 is required for expression on hepatocyte surface. Glycosylated. As to expression, highly expressed in liver and kidney, and at lower levels in brain, lung, skeletal muscle and proximal colon.

The protein localises to the basolateral cell membrane. It carries out the reaction estrone 3-sulfate(out) + hydrogencarbonate(in) = estrone 3-sulfate(in) + hydrogencarbonate(out). The enzyme catalyses taurocholate(out) + hydrogencarbonate(in) = taurocholate(in) + hydrogencarbonate(out). It catalyses the reaction L-thyroxine(out) = L-thyroxine(in). The catalysed reaction is prostaglandin E2(out) = prostaglandin E2(in). It carries out the reaction 17beta-estradiol 17-O-(beta-D-glucuronate)(out) = 17beta-estradiol 17-O-(beta-D-glucuronate)(in). The enzyme catalyses dehydroepiandrosterone 3-sulfate(out) = dehydroepiandrosterone 3-sulfate(in). Mediates the Na(+)-independent transport of organic anions such as steroid sulfate conjugates (dehydroepiandrosterone sulfate (DHEAS), 17-beta-glucuronosyl estradiol, estrone-3-sulfate), conjugated (taurocholate) and unconjugated (cholate) bile acids, prostaglandin E2 (PGE2) and L-thyroxine T4. Also capable of transporting sulfobromophthalein (BSP), ouabain and gadoxetate. Hydrogencarbonate/HCO3(-) acts as the probable counteranion that exchanges for organic anions. Shows a pH-sensitive substrate specificity which may be ascribed to the protonation state of the binding site and leads to a stimulation of substrate transport in an acidic microenvironment. The sequence is that of Solute carrier organic anion transporter family member 1A1 from Rattus norvegicus (Rat).